We begin with the raw amino-acid sequence, 260 residues long: Snake venom serine protease homolog (260 aa).

The signal sequence occupies residues 1–18 (MVLVRVLANLLMLQLSYA). Positions 19-24 (QKSSEL) are excised as a propeptide. The Peptidase S1 domain maps to 25-251 (IIGGDECNIN…HLDWIKSIIA (227 aa)). 6 disulfide bridges follow: Cys-31-Cys-165, Cys-52-Cys-68, Cys-100-Cys-258, Cys-144-Cys-212, Cys-176-Cys-191, and Cys-202-Cys-227. Asp-112 serves as the catalytic Charge relay system. Asn-123 and Asn-124 each carry an N-linked (GlcNAc...) asparagine glycan. Ser-206 (charge relay system) is an active-site residue.

This sequence belongs to the peptidase S1 family. Snake venom subfamily. Expressed by the venom gland.

The protein localises to the secreted. Functionally, snake venom serine protease homolog. May act in the hemostasis system of the prey. The protein is Snake venom serine protease homolog of Protobothrops jerdonii (Jerdon's pitviper).